The chain runs to 193 residues: Bifunctional protein PyrR (193 aa).

Residues 57 to 58 (TR), Arg98, 119 to 127 (DDVLYSGRS), Arg152, and Val176 each bind substrate. Residues 115–127 (VILVDDVLYSGRS) carry the PRPP-binding motif.

This sequence belongs to the purine/pyrimidine phosphoribosyltransferase family. PyrR subfamily.

It catalyses the reaction UMP + diphosphate = 5-phospho-alpha-D-ribose 1-diphosphate + uracil. Its function is as follows. Regulates the transcription of the pyrimidine nucleotide (pyr) operon in response to exogenous pyrimidines. In terms of biological role, also displays a weak uracil phosphoribosyltransferase activity which is not physiologically significant. This Mycobacterium bovis (strain ATCC BAA-935 / AF2122/97) protein is Bifunctional protein PyrR.